The primary structure comprises 741 residues: MLERKKPKTAENQKASEENEITQPGGSSAKPGLPCLNFEAVLSPDPALIHSTHSLTNSHAHTGSSDCDISCKGMTERIHSINLHNFSNSVLETLNEQRNRGHFCDVTVRIHGSMLRAHRCVLAAGSPFFQDKLLLGYSDIEIPSVVSVQSVQKLIDFMYSGVLRVSQSEALQILTAASILQIKTVIDECTRIVSQNVGDVFPGIQDSGQDTPRGTPESGTSGQSSDTESGYLQSHPQHSVDRIYSALYACSMQNGSGERSFYSGAVVSHHETALGLPRDHHMEDPSWITRIHERSQQMERYLSTTPETTHCRKQPRPVRIQTLVGNIHIKQEMEDDYDYYGQQRVQILERNESEECTEDTDQAEGTESEPKGESFDSGVSSSIGTEPDSVEQQFGPGAARDSQAEPTQPEQAAEAPAEGGPQTNQLETGASSPERSNEVEMDSTVITVSNSSDKSVLQQPSVNTSIGQPLPSTQLYLRQTETLTSNLRMPLTLTSNTQVIGTAGNTYLPALFTTQPAGSGPKPFLFSLPQPLAGQQTQFVTVSQPGLSTFTAQLPAPQPLASSAGHSTASGQGEKKPYECTLCNKTFTAKQNYVKHMFVHTGEKPHQCSICWRSFSLKDYLIKHMVTHTGVRAYQCSICNKRFTQKSSLNVHMRLHRGEKSYECYICKKKFSHKTLLERHVALHSASNGTPPAGTPPGARAGPPGVVACTEGTTYVCSVCPAKFDQIEQFNDHMRMHVSDG.

Positions 1–17 (MLERKKPKTAENQKASE) are enriched in basic and acidic residues. Residues 1–32 (MLERKKPKTAENQKASEENEITQPGGSSAKPG) are disordered. Residues 104-167 (CDVTVRIHGS…MYSGVLRVSQ (64 aa)) form the BTB domain. The disordered stretch occupies residues 203 to 235 (GIQDSGQDTPRGTPESGTSGQSSDTESGYLQSH). Over residues 206 to 235 (DSGQDTPRGTPESGTSGQSSDTESGYLQSH) the composition is skewed to polar residues. The residue at position 211 (T211) is a Phosphothreonine. K330 participates in a covalent cross-link: Glycyl lysine isopeptide (Lys-Gly) (interchain with G-Cter in SUMO1); alternate. A Glycyl lysine isopeptide (Lys-Gly) (interchain with G-Cter in SUMO2); alternate cross-link involves residue K330. Residues 350–440 (RNESEECTED…SSPERSNEVE (91 aa)) form a disordered region. S353 bears the Phosphoserine mark. Residues 354–367 (EECTEDTDQAEGTE) show a composition bias toward acidic residues. T357 is subject to Phosphothreonine. K371 participates in a covalent cross-link: Glycyl lysine isopeptide (Lys-Gly) (interchain with G-Cter in SUMO2). The span at 404-423 (AEPTQPEQAAEAPAEGGPQT) shows a compositional bias: low complexity. Residues 424–434 (NQLETGASSPE) show a composition bias toward polar residues. 4 consecutive C2H2-type zinc fingers follow at residues 578-600 (YECT…MFVH), 606-628 (HQCS…MVTH), 634-656 (YQCS…MRLH), and 662-684 (YECY…VALH). T690 and T695 each carry phosphothreonine. A C2H2-type 5 zinc finger spans residues 715–737 (YVCSVCPAKFDQIEQFNDHMRMH). Residue K723 forms a Glycyl lysine isopeptide (Lys-Gly) (interchain with G-Cter in SUMO2) linkage.

As to quaternary structure, can homodimerize. Binds to DNA. Sumoylated with SUMO1. Expressed in spleen, lymph node, thymus, peripheral blood leukocytes, and fetal liver.

It localises to the nucleus. Functionally, may be a transcription factor that may be involved in hematopoiesis, oncogenesis, and immune responses. Plays a role in postnatal myogenesis, may be involved in the regulation of satellite cells self-renewal. In Homo sapiens (Human), this protein is Zinc finger and BTB domain-containing protein 20 (ZBTB20).